The following is a 155-amino-acid chain: Transcriptional regulator MraZ (155 aa).

2 SpoVT-AbrB domains span residues 7-63 and 92-135; these read REQH…EPSV and LDQT…EPLR.

It belongs to the MraZ family. In terms of assembly, forms oligomers.

The protein localises to the cytoplasm. It localises to the nucleoid. In Chlorobaculum tepidum (strain ATCC 49652 / DSM 12025 / NBRC 103806 / TLS) (Chlorobium tepidum), this protein is Transcriptional regulator MraZ.